Reading from the N-terminus, the 660-residue chain is Phosphatidylinositol-binding clathrin assembly protein (660 aa).

At Ser2 the chain carries N-acetylserine. An ENTH domain is found at 14–145 (QHSVTGSAVS…VSYRQVAFDF (132 aa)). 2 positions are modified to phosphoserine: Ser16 and Ser20. The segment at 221 to 294 (KYFDMKKNQC…LEGKKIKDST (74 aa)) is interaction with PIMREG. Lys238 is covalently cross-linked (Glycyl lysine isopeptide (Lys-Gly) (interchain with G-Cter in SUMO2)). A phosphoserine mark is found at Ser303 and Ser315. Positions 556–566 (GTTKNDVSWSQ) are enriched in polar residues. Positions 556–580 (GTTKNDVSWSQPGEKKLTGGSNWQP) are disordered.

The protein belongs to the PICALM/SNAP91 family. As to quaternary structure, binds to clathrin; involves primarily the C-terminal sequences, but the full-length protein is required for full binding capacity. Binds phosphatidylinositol 4,5- bisphosphate. Interacts with PIMREG; this interaction may change the subcellular location into the nucleus. Interacts with AP2A1 (via its alpha-appendage domain). Interacts (via N-terminus) with VAMP2; VAMP3; VAMP7 and VAMP8 (Via N-terminus). Interacts with LC3/MAP1LC3A. Skins and livers of 1-week-old mice.

It localises to the cell membrane. The protein resides in the membrane. It is found in the clathrin-coated pit. Its subcellular location is the golgi apparatus. The protein localises to the cytoplasmic vesicle. It localises to the clathrin-coated vesicle. The protein resides in the nucleus. Functionally, cytoplasmic adapter protein that plays a critical role in clathrin-mediated endocytosis which is important in processes such as internalization of cell receptors, synaptic transmission or removal of apoptotic cells. Recruits AP-2 and attaches clathrin triskelions to the cytoplasmic side of plasma membrane leading to clathrin-coated vesicles (CCVs) assembly. Furthermore, regulates clathrin-coated vesicle size and maturation by directly sensing and driving membrane curvature. In addition to binding to clathrin, mediates the endocytosis of small R-SNARES (Soluble NSF Attachment Protein REceptors) between plasma membranes and endosomes including VAMP2, VAMP3, VAMP4, VAMP7 or VAMP8. In turn, PICALM-dependent SNARE endocytosis is required for the formation and maturation of autophagic precursors. Modulates thereby autophagy and the turnover of autophagy substrates such as MAPT/TAU or amyloid precursor protein cleaved C-terminal fragment (APP-CTF). In Mus musculus (Mouse), this protein is Phosphatidylinositol-binding clathrin assembly protein (Picalm).